The primary structure comprises 438 residues: UDP-N-acetylmuramoylalanine--D-glutamate ligase (438 aa).

ATP is bound at residue 112-118 (GSNGKST).

The protein belongs to the MurCDEF family.

Its subcellular location is the cytoplasm. It carries out the reaction UDP-N-acetyl-alpha-D-muramoyl-L-alanine + D-glutamate + ATP = UDP-N-acetyl-alpha-D-muramoyl-L-alanyl-D-glutamate + ADP + phosphate + H(+). It participates in cell wall biogenesis; peptidoglycan biosynthesis. In terms of biological role, cell wall formation. Catalyzes the addition of glutamate to the nucleotide precursor UDP-N-acetylmuramoyl-L-alanine (UMA). This Escherichia coli O6:K15:H31 (strain 536 / UPEC) protein is UDP-N-acetylmuramoylalanine--D-glutamate ligase.